The following is an 896-amino-acid chain: Protein argonaute 9 (896 aa).

Residues 267 to 380 enclose the PAZ domain; that stretch reads PVVDFLLANQ…FPIEFCNLVS (114 aa). Residues 550–857 form the Piwi domain; sequence FLLCILAERK…AAAQMGTVMK (308 aa).

The protein belongs to the argonaute family. Ago subfamily. As to expression, expressed in embryonic shoot apex region, pollen and developing ovules.

Its function is as follows. Involved in RNA-mediated post-transcriptional gene silencing (PTGS). Main component of the RNA-induced silencing complex (RISC) that binds to a short guide RNA such as a microRNA (miRNA) or small interfering RNA (siRNA). RISC uses the mature miRNA or siRNA as a guide for slicer-directed cleavage of homologous mRNAs to repress gene expression. Associates preferentially with small RNAs of 24 nucleotide in length with a 5' terminal adenosine. Interacts with 24 nucleotide sRNAs derived from transposable elements (TEs). Required to silence pericentrometric-located TEs in female gametes and their accessory cells. Necessary to inactivate a significant proportion of long terminal repeat retrotransposons (LTRs) in the ovule. Required to specify cell fate in ovule. Involved in the control of female gamete formation by restricting the specification of gametophyte precursors in a dosage-dependent, non-cell-autonomous manner. Targeted by turnip yellows virus (TuYV) protein P0 (via F-box-like domain) for probable proteasome degradation and thereby inactivating AGO9 function in RNA silencing. The sequence is that of Protein argonaute 9 (AGO9) from Arabidopsis thaliana (Mouse-ear cress).